A 506-amino-acid chain; its full sequence is Bone morphogenetic protein 6 (506 aa).

The signal sequence occupies residues 1 to 20; it reads MPGLGRRAQWLCWWWGLLCS. Positions 21–367 are excised as a propeptide; sequence CGPPPLRPPL…VSEVHVRTTR (347 aa). Disordered regions lie at residues 44–64, 87–125, and 139–195; these read AGGS…SGFL, PHRP…RLKS, and KDDE…PLTS. Positions 96-112 are enriched in low complexity; the sequence is LQQPQSPVLPQQQQSQQ. Acidic residues predominate over residues 140–153; it reads DDEEDGVSEGEGLE. Asn-234, Asn-262, Asn-379, Asn-397, and Asn-447 each carry an N-linked (GlcNAc...) asparagine glycan. The interval 366-397 is disordered; sequence TRSASSRRRQQSRNRSTQSQDVSRGSSASDYN. Over residues 386-397 the composition is skewed to polar residues; the sequence is DVSRGSSASDYN. Cystine bridges form between Cys-405/Cys-471, Cys-434/Cys-503, and Cys-438/Cys-505.

This sequence belongs to the TGF-beta family. In terms of assembly, interacts with SOSTDC1. Interacts (when glycosylated) with type I receptor ACVR1; the interaction may induce HAMP expression. Interacts with type II receptor ACVR2B. Interacts with Hemojuvelin/HJV. Interacts with ERFE; the interaction inhibits BMP-induced transcription of HAMP. Interacts with BMPR1A/ALK3. Forms heterodimers with BMP2 in vitro; the heterodimer then binds to its receptor BMPR1A /ALK3 and may induce HAMP expression.

Its subcellular location is the secreted. In terms of biological role, growth factor of the TGF-beta superfamily that plays essential roles in many developmental processes including cartilage and bone formation. Also plays an important role in the regulation of HAMP/hepcidin expression and iron metabolism by acting as a ligand for hemojuvelin/HJV. Also acts to promote expression of HAMP, potentially via the interaction with its receptor BMPR1A/ALK3. Initiates the canonical BMP signaling cascade by associating with type I receptor ACVR1 and type II receptor ACVR2B. In turn, ACVR1 propagates signal by phosphorylating SMAD1/5/8 that travel to the nucleus and act as activators and repressors of transcription of target. Can also signal through non-canonical pathway such as TAZ-Hippo signaling cascade to modulate VEGF signaling by regulating VEGFR2 expression. The protein is Bone morphogenetic protein 6 (Bmp6) of Rattus norvegicus (Rat).